Consider the following 501-residue polypeptide: Ribose import ATP-binding protein RbsA (501 aa).

2 ABC transporter domains span residues 6-242 (LQLS…VGRK) and 253-495 (VHGQ…VGKK). ATP is bound at residue 38 to 45 (GENGAGKS).

The protein belongs to the ABC transporter superfamily. Ribose importer (TC 3.A.1.2.1) family. As to quaternary structure, the complex is composed of an ATP-binding protein (RbsA), two transmembrane proteins (RbsC) and a solute-binding protein (RbsB).

It is found in the cell inner membrane. It carries out the reaction D-ribose(out) + ATP + H2O = D-ribose(in) + ADP + phosphate + H(+). Its function is as follows. Part of the ABC transporter complex RbsABC involved in ribose import. Responsible for energy coupling to the transport system. The protein is Ribose import ATP-binding protein RbsA of Vibrio vulnificus (strain YJ016).